A 1255-amino-acid chain; its full sequence is ATP-binding cassette sub-family B member 5 (1255 aa).

A helical transmembrane segment spans residues 46 to 66; the sequence is IVLMTLGILASMINGATVPLM. The ABC transmembrane type-1 1 domain maps to 51–351; sequence LGILASMING…SVAPHLETFT (301 aa). N-linked (GlcNAc...) asparagine glycans are attached at residues asparagine 86 and asparagine 92. A helical transmembrane segment spans residues 104–124; it reads IIVLTLYYIGIGAAALIFGYV. The N-linked (GlcNAc...) asparagine glycan is linked to asparagine 189. Helical transmembrane passes span 290 to 310 and 314 to 334; these read LSLG…FWYG and IFGG…FSVI. 2 N-linked (GlcNAc...) asparagine glycosylation sites follow: asparagine 372 and asparagine 391. Positions 387 to 623 constitute an ABC transporter 1 domain; it reads IEFKNVSFSY…QGLYYSLAMA (237 aa). Position 422-429 (422-429) interacts with ATP; the sequence is GPSGSGKS. Asparagine 643 carries N-linked (GlcNAc...) asparagine glycosylation. Helical transmembrane passes span 694–714 and 738–758; these read VLGT…SIIF and MMLV…GLFY. In terms of domain architecture, ABC transmembrane type-1 2 spans 694–981; sequence VLGTLASALN…TLVWAPEYSK (288 aa). An N-linked (GlcNAc...) asparagine glycan is attached at asparagine 790. The next 3 membrane-spanning stretches (helical) occupy residues 814–836, 841–863, and 955–975; these read LGIV…IYGW, LILS…MAGF, and MFIV…TLVW. The ABC transporter 2 domain occupies 1016–1254; the sequence is LEFREVSFVY…GDTYFKLVAA (239 aa). Residue asparagine 1036 is glycosylated (N-linked (GlcNAc...) asparagine). Residue 1051–1058 participates in ATP binding; sequence GSSGCGKS. N-linked (GlcNAc...) asparagine glycans are attached at residues asparagine 1105, asparagine 1189, and asparagine 1229.

This sequence belongs to the ABC transporter superfamily. ABCB family. Multidrug resistance exporter (TC 3.A.1.201) subfamily. In terms of tissue distribution, in developing eye, expressed in basal limbal epithelium but not in central cornea. Acts as a marker of limbal stem cells.

The protein localises to the cell membrane. The enzyme catalyses daunorubicin(in) + ATP + H2O = daunorubicin(out) + ADP + phosphate + H(+). In terms of biological role, energy-dependent efflux transporter responsible for decreased drug accumulation in multidrug-resistant cells. Specifically present in limbal stem cells, where it plays a key role in corneal development and repair. This is ATP-binding cassette sub-family B member 5 from Mus musculus (Mouse).